The following is a 475-amino-acid chain: Ribulose bisphosphate carboxylase large chain (475 aa).

The propeptide occupies 1–2; the sequence is MS. Proline 3 carries the N-acetylproline modification. The residue at position 14 (lysine 14) is an N6,N6,N6-trimethyllysine. Asparagine 123 and threonine 173 together coordinate substrate. Lysine 175 serves as the catalytic Proton acceptor. Lysine 177 contributes to the substrate binding site. Residues lysine 201, aspartate 203, and glutamate 204 each contribute to the Mg(2+) site. Residue lysine 201 is modified to N6-carboxylysine. The active-site Proton acceptor is the histidine 294. Arginine 295, histidine 327, and serine 379 together coordinate substrate.

The protein belongs to the RuBisCO large chain family. Type I subfamily. Heterohexadecamer of 8 large chains and 8 small chains; disulfide-linked. The disulfide link is formed within the large subunit homodimers. The cofactor is Mg(2+). The disulfide bond which can form in the large chain dimeric partners within the hexadecamer appears to be associated with oxidative stress and protein turnover.

Its subcellular location is the plastid. It is found in the chloroplast. The catalysed reaction is 2 (2R)-3-phosphoglycerate + 2 H(+) = D-ribulose 1,5-bisphosphate + CO2 + H2O. It catalyses the reaction D-ribulose 1,5-bisphosphate + O2 = 2-phosphoglycolate + (2R)-3-phosphoglycerate + 2 H(+). Functionally, ruBisCO catalyzes two reactions: the carboxylation of D-ribulose 1,5-bisphosphate, the primary event in carbon dioxide fixation, as well as the oxidative fragmentation of the pentose substrate in the photorespiration process. Both reactions occur simultaneously and in competition at the same active site. The chain is Ribulose bisphosphate carboxylase large chain from Pinus balfouriana (Foxtail pine).